The following is a 398-amino-acid chain: uncharacterized protein (398 aa).

Helical transmembrane passes span 31 to 51 (VVFS…CLLF) and 56 to 76 (AFIT…FFGC).

This sequence belongs to the chlamydial CPn_0129/CT_036/TC_0306 family.

The protein resides in the cell membrane. This is an uncharacterized protein from Chlamydia muridarum (strain MoPn / Nigg).